The chain runs to 697 residues: Polyribonucleotide nucleotidyltransferase (697 aa).

Mg(2+) contacts are provided by Asp489 and Asp495. The KH domain occupies 556–615; sequence PRIETIKIKPDKIREVIGSGGKVIRGITEATGVKIEIQDDGTINIASADPEATKKAIAMI. Residues 625 to 693 enclose the S1 motif domain; that stretch reads GKTYKGRIVK…RSGRVKLSRK (69 aa).

This sequence belongs to the polyribonucleotide nucleotidyltransferase family. The cofactor is Mg(2+).

It localises to the cytoplasm. The catalysed reaction is RNA(n+1) + phosphate = RNA(n) + a ribonucleoside 5'-diphosphate. Involved in mRNA degradation. Catalyzes the phosphorolysis of single-stranded polyribonucleotides processively in the 3'- to 5'-direction. The protein is Polyribonucleotide nucleotidyltransferase of Bdellovibrio bacteriovorus (strain ATCC 15356 / DSM 50701 / NCIMB 9529 / HD100).